We begin with the raw amino-acid sequence, 272 residues long: NAD kinase (272 aa).

Residue D62 is the Proton acceptor of the active site. Residues 62–63, R67, 129–130, R140, K157, D159, I167, 170–175, A194, and Q229 each bind NAD(+); these read DG, NE, and SSYSSS.

This sequence belongs to the NAD kinase family. It depends on a divalent metal cation as a cofactor.

It is found in the cytoplasm. The catalysed reaction is NAD(+) + ATP = ADP + NADP(+) + H(+). Its function is as follows. Involved in the regulation of the intracellular balance of NAD and NADP, and is a key enzyme in the biosynthesis of NADP. Catalyzes specifically the phosphorylation on 2'-hydroxyl of the adenosine moiety of NAD to yield NADP. In Thermoplasma acidophilum (strain ATCC 25905 / DSM 1728 / JCM 9062 / NBRC 15155 / AMRC-C165), this protein is NAD kinase.